Here is a 737-residue protein sequence, read N- to C-terminus: Polyribonucleotide nucleotidyltransferase (737 aa).

Positions 489 and 495 each coordinate Mg(2+). In terms of domain architecture, KH spans 556-615; sequence PKIDTIKIDVDKIKIVIGKGGETIDKIIAETGVKIDIDEEGNVSIYSSDQDAINRAKEII. The region spanning 625–693 is the S1 motif domain; it reads DEVYRAKVVR…EKGRIDASMK (69 aa). A disordered region spans residues 691–737; that stretch reads SMKALLPRPPKPEHDEKGEKSERPHRPRHHKDHKPKKEFTETPKDSE. Over residues 700–714 the composition is skewed to basic and acidic residues; it reads PKPEHDEKGEKSERP. Residues 715-724 show a composition bias toward basic residues; that stretch reads HRPRHHKDHK. Basic and acidic residues predominate over residues 725–737; sequence PKKEFTETPKDSE.

It belongs to the polyribonucleotide nucleotidyltransferase family. It depends on Mg(2+) as a cofactor.

The protein resides in the cytoplasm. It carries out the reaction RNA(n+1) + phosphate = RNA(n) + a ribonucleoside 5'-diphosphate. In terms of biological role, involved in mRNA degradation. Catalyzes the phosphorolysis of single-stranded polyribonucleotides processively in the 3'- to 5'-direction. This chain is Polyribonucleotide nucleotidyltransferase, found in Streptococcus pneumoniae (strain 70585).